A 461-amino-acid polypeptide reads, in one-letter code: GTPase Der (461 aa).

2 consecutive EngA-type G domains span residues 3 to 167 and 190 to 371; these read PQVI…GEKQ and LKLA…AAWS. Residues 9–16, 56–60, 119–122, 196–203, 249–253, and 314–317 each bind GTP; these read GRPNVGKS, DTAGW, NKAE, GRPNAGKS, DTAGM, and NKWD. The KH-like domain occupies 372-456; sequence KRVPTAALNR…PIRLTLRSPK (85 aa).

This sequence belongs to the TRAFAC class TrmE-Era-EngA-EngB-Septin-like GTPase superfamily. EngA (Der) GTPase family. Associates with the 50S ribosomal subunit.

In terms of biological role, GTPase that plays an essential role in the late steps of ribosome biogenesis. In Novosphingobium aromaticivorans (strain ATCC 700278 / DSM 12444 / CCUG 56034 / CIP 105152 / NBRC 16084 / F199), this protein is GTPase Der.